Here is a 64-residue protein sequence, read N- to C-terminus: uncharacterized protein (64 aa).

This sequence belongs to the orthopoxviruses VACWR006 protein family.

This is an uncharacterized protein from Vaccinia virus (strain Western Reserve) (VACV).